We begin with the raw amino-acid sequence, 203 residues long: Recombination protein RecR (203 aa).

The C4-type zinc finger occupies 56-71; sequence CTVCGNVSDDERCRIC. In terms of domain architecture, Toprim spans 79-179; that stretch reads SVVCVVEEPK…TVTRIASGLP (101 aa).

It belongs to the RecR family.

May play a role in DNA repair. It seems to be involved in an RecBC-independent recombinational process of DNA repair. It may act with RecF and RecO. The sequence is that of Recombination protein RecR from Mycobacterium leprae (strain TN).